A 22-amino-acid chain; its full sequence is Brevinin-1OKa (22 aa).

Lysine amide is present on Lys-22.

In terms of tissue distribution, expressed by the skin glands.

It localises to the secreted. Its function is as follows. Antimicrobial peptide. Active against Gram-negative bacterium E.coli (MIC=12.5 uM) and against Gram-positive bacterium S.aureus (MIC=12.5 uM). The sequence is that of Brevinin-1OKa from Nidirana okinavana (Kampira Falls frog).